The chain runs to 349 residues: tRNA pseudouridine synthase D (349 aa).

F27 contacts substrate. The active-site Nucleophile is the D80. N129 contacts substrate. The region spanning 155–303 (GVPNYFGAQR…VEAARRAMLL (149 aa)) is the TRUD domain. F329 contributes to the substrate binding site.

The protein belongs to the pseudouridine synthase TruD family.

It catalyses the reaction uridine(13) in tRNA = pseudouridine(13) in tRNA. Responsible for synthesis of pseudouridine from uracil-13 in transfer RNAs. The sequence is that of tRNA pseudouridine synthase D from Shigella sonnei (strain Ss046).